The sequence spans 333 residues: Fructose-1,6-bisphosphatase class 1 (333 aa).

Glu-92, Asp-113, Leu-115, and Asp-116 together coordinate Mg(2+). Substrate contacts are provided by residues 116–119, Asn-209, Tyr-242, and Lys-272; that span reads DGSS. Residue Glu-278 coordinates Mg(2+).

Belongs to the FBPase class 1 family. As to quaternary structure, homotetramer. It depends on Mg(2+) as a cofactor.

Its subcellular location is the cytoplasm. It carries out the reaction beta-D-fructose 1,6-bisphosphate + H2O = beta-D-fructose 6-phosphate + phosphate. Its pathway is carbohydrate biosynthesis; Calvin cycle. The chain is Fructose-1,6-bisphosphatase class 1 from Pelodictyon phaeoclathratiforme (strain DSM 5477 / BU-1).